The following is a 396-amino-acid chain: Phosphoglycerate kinase (396 aa).

Residues 21–23 (DFN), Arg-36, 59–62 (HLGK), Arg-119, and Arg-156 each bind substrate. Residues Lys-206, Glu-325, and 352–355 (GGDS) contribute to the ATP site.

The protein belongs to the phosphoglycerate kinase family. As to quaternary structure, monomer.

The protein localises to the cytoplasm. It carries out the reaction (2R)-3-phosphoglycerate + ATP = (2R)-3-phospho-glyceroyl phosphate + ADP. It functions in the pathway carbohydrate degradation; glycolysis; pyruvate from D-glyceraldehyde 3-phosphate: step 2/5. The sequence is that of Phosphoglycerate kinase from Staphylococcus epidermidis (strain ATCC 35984 / DSM 28319 / BCRC 17069 / CCUG 31568 / BM 3577 / RP62A).